A 644-amino-acid polypeptide reads, in one-letter code: Protein ecdysoneless homolog (644 aa).

Disordered stretches follow at residues 430 to 449 (AVGK…QNYD), 496 to 537 (LGPR…SLKG), 567 to 589 (QVEP…TGES), and 623 to 644 (QSMG…PTKN). Residues 431 to 447 (VGKKESESVSKEEKEQN) show a composition bias toward basic and acidic residues. The interval 439–644 (VSKEEKEQNY…HRPTSKPTKN (206 aa)) is transcription activation. The involved in nuclear export stretch occupies residues 481–497 (ITFDADSFLNYFDKILG). Residues 502-532 (ESDSDDLDDEDFECLDSDDDLDFETHEPGEE) are acidic region required for transactivation activity. Ser503, Ser505, and Ser518 each carry phosphoserine. Over residues 503-523 (SDSDDLDDEDFECLDSDDDLD) the composition is skewed to acidic residues. The segment covering 524-534 (FETHEPGEEAS) has biased composition (basic and acidic residues). The segment covering 567 to 577 (QVEPVSQTTDN) has biased composition (polar residues).

Belongs to the ECD family. As to quaternary structure, interacts with TP53, MDM2, TXNIP. Interacts (phosphorylated) with PIH1D1. Interacts with RUVBL1 mediating the PIH1D1-independent association with the R2TP complex. Interacts with RB1, RBL1 and RBL2; ECD competes with E2F1 for binding to hypophospshorylated RB1. Interacts with EP300. Interacts with DDX39A. Phosphorylated predominantly by CK2 on two serine-containing clusters; involved in cell cycle regulation activity. As to expression, highly expressed in muscle and heart. Over-expressed in pancreatic and breast cancers.

It localises to the cytoplasm. Its subcellular location is the nucleus. Its function is as follows. Regulator of p53/TP53 stability and function. Inhibits MDM2-mediated degradation of p53/TP53 possibly by cooperating in part with TXNIP. May be involved transcriptional regulation. In vitro has intrinsic transactivation activity enhanced by EP300. May be a transcriptional activator required for the expression of glycolytic genes. Involved in regulation of cell cycle progression. Proposed to disrupt Rb-E2F binding leading to transcriptional activation of E2F proteins. The cell cycle -regulating function may depend on its RUVBL1-mediated association with the R2TP complex. May play a role in regulation of pre-mRNA splicing. Participates together with DDX39A in mRNA nuclear export. This is Protein ecdysoneless homolog (ECD) from Homo sapiens (Human).